A 123-amino-acid polypeptide reads, in one-letter code: Protein Wnt-3b (123 aa).

A lipid anchor (O-palmitoleoyl serine; by PORCN) is attached at serine 1. Cysteine 89 and cysteine 104 are disulfide-bonded. Asparagine 90 carries N-linked (GlcNAc...) asparagine glycosylation.

It belongs to the Wnt family. Post-translationally, palmitoleoylation is required for efficient binding to frizzled receptors. Depalmitoleoylation leads to Wnt signaling pathway inhibition.

The protein localises to the secreted. Its subcellular location is the extracellular space. It is found in the extracellular matrix. In terms of biological role, ligand for members of the frizzled family of seven transmembrane receptors. Probable developmental protein. May be a signaling molecule which affects the development of discrete regions of tissues. Is likely to signal over only few cell diameters. This chain is Protein Wnt-3b (WNT3B), found in Meleagris gallopavo (Wild turkey).